The sequence spans 529 residues: Chaperonin GroEL, chloroplastic (529 aa).

Residues 29–32 (TLGP), 86–90 (DGTTT), glycine 414, 480–482 (DAA), and aspartate 496 each bind ATP.

This sequence belongs to the chaperonin (HSP60) family. Forms a cylinder of 14 subunits composed of two heptameric rings stacked back-to-back. Interacts with the co-chaperonin GroES.

The protein resides in the plastid. It is found in the chloroplast. The catalysed reaction is ATP + H2O + a folded polypeptide = ADP + phosphate + an unfolded polypeptide.. Together with its co-chaperonin GroES, plays an essential role in assisting protein folding. The GroEL-GroES system forms a nano-cage that allows encapsulation of the non-native substrate proteins and provides a physical environment optimized to promote and accelerate protein folding. In Guillardia theta (Cryptophyte), this protein is Chaperonin GroEL, chloroplastic.